The primary structure comprises 1288 residues: MNEKEELHLYHVSLQKQRNYVHSCIGHFVDYRHHHIRAQGGSVEGGKKGSKWRKQLQICMATQTQVELYDVEEGRLRRLFTRTVFGTITGLSSVVADGRSVLIVVGDSGKMSVLRFKYEGGRVRLEALFNEPLSRSGVRRLSPQAHVSVDPQGRCVLLSAMERNKVCYLMDVKQGELQVSSPLEANRPNYVTMQTAACDVAFDNPIFASLEIDLADGAKYLFFYMLDLGLNHMAKVADFELGDGSANFIMSVPDLEQYGINTKAGGPDDGDPDAIVPFVLMGFDNYVSLKDLRGRYDINVQIPTRKLSQKTIITAGTVQKLKRDFFMLLQSNHGDLYKVKILPDEKTASPVVTISYFDTIPQAQNLHIFKHGYMFANSEYGNSYLYQFENLDDEEESMLTSVMPGRRLIIEPRTVLKNLLVADKLALVNPILSSQLTERVPLTIATSTLGDVRLFTAGVNFMDIISSPLPAAPLDIWTVATNGSRFHKLLFIALQESTMILKIAAGTVEELELPHNPFVIAQDKTVLIAHMGGQSIIQVTENKMVHIIENRDESYESKLEWFPPAGICILKASSNSTQLILALSNNEVVYFEIGSNESLNELQDRIEVEERITALAIGNGNRSDYMIIASVDSTVKVYSLKVQDQANFLEVVSMQVLVSPASSLQLASSGGSLCLHIGLDSGVYVRSKLDRNTGELFDVRTKYLGTKPVEISLLLDMNPYINEEVDDEGEEEEEQDDEESLGGPHSRLVPCVVLHSGKTWISYELDSSLFIRPLLNDQSLKRVAQFTSNEIQRNGCCSISSAGFLVIGRIGTFRNNDCWFQESSLALPDSEDSVNGNELENDEKDPDALLEEKQKVNSSIGKLIIPDPDDIKLFYYCEYNEVENSCRVSLFKQGISYKHENSTEAFQLIPDCRPSTATIARFGLDMKHLVISTVNGVLKTFVIRITKAANNRRFELLALHDTVAGSTIHAMCPFHDKLLVPLANAVVLYGLGKKQLLKKSISYLPTSITKIVALDQWNGTRVAVGDIHESVTLLHFDERKNQFIPVADDVTKRHVTVVKFVDECTVIGGDRFGNIWLLRLPLEYDRLIKEGVDSYLLTLNTGIPSNIRECVFKWQLLNHFYINDIPMSFHLIASPQMADRASILYAGLQGTIGYLIPLITRREIEFFDLLEQAMRDADHLFYLDQENRLNDTSELNDGADEEGSVIDRRFPSVQKKRKIPEGAYSLVGRDAMMYRSYYNPVRHVTDGDLCEQFLELYPSEKNFLAARVDNRSVQEIERRINDMRTNCM.

The segment covering 725 to 740 has biased composition (acidic residues); it reads VDDEGEEEEEQDDEES. The disordered stretch occupies residues 725-744; sequence VDDEGEEEEEQDDEESLGGP.

This sequence belongs to the RSE1 family. Associated with the spliceosome.

It localises to the nucleus. Functionally, involved in pre-mRNA splicing and cell cycle control. This chain is Pre-mRNA-splicing factor RSE1 (RSE1), found in Eremothecium gossypii (strain ATCC 10895 / CBS 109.51 / FGSC 9923 / NRRL Y-1056) (Yeast).